We begin with the raw amino-acid sequence, 145 residues long: D-aminoacyl-tRNA deacylase (145 aa).

Residues 137-138 carry the Gly-cisPro motif, important for rejection of L-amino acids motif; the sequence is GP.

The protein belongs to the DTD family. Homodimer.

Its subcellular location is the cytoplasm. The enzyme catalyses glycyl-tRNA(Ala) + H2O = tRNA(Ala) + glycine + H(+). It catalyses the reaction a D-aminoacyl-tRNA + H2O = a tRNA + a D-alpha-amino acid + H(+). In terms of biological role, an aminoacyl-tRNA editing enzyme that deacylates mischarged D-aminoacyl-tRNAs. Also deacylates mischarged glycyl-tRNA(Ala), protecting cells against glycine mischarging by AlaRS. Acts via tRNA-based rather than protein-based catalysis; rejects L-amino acids rather than detecting D-amino acids in the active site. By recycling D-aminoacyl-tRNA to D-amino acids and free tRNA molecules, this enzyme counteracts the toxicity associated with the formation of D-aminoacyl-tRNA entities in vivo and helps enforce protein L-homochirality. The polypeptide is D-aminoacyl-tRNA deacylase (Idiomarina loihiensis (strain ATCC BAA-735 / DSM 15497 / L2-TR)).